Here is a 363-residue protein sequence, read N- to C-terminus: MQLLQSSVIAATVGAALVAAVPVELKARDSCTFTSAADAKSGKTSCSTITLSNIEVPAGETLDLTGLNDGTTVIFSGETTFGYKEWEGPLISVSGTNIKVQQASGAKIDGDGSRWWDGKGGNGGKTKPKFFYAHKLDSSSITGLQIYNTPVQGFSIQSDNLNITDVTIDNSAGTAEGHNTDAFDVGSSTYINIDGATVYNQDDCLAINSGSHITFTNGYCDGGHGLSIGSVGGRSDNTVEDVTISNSKVVNSQNGVRIKTVYDATGTVSNVKFEDITLSGITKYGLIVEQDYENGSPTGTPTNGIKVSDITFDKVTGTVESDATDIYILCGSGSCTDWTWSGVSITGGKTSSKCENVSTGASC.

The N-terminal stretch at 1–20 (MQLLQSSVIAATVGAALVAA) is a signal peptide. The propeptide occupies 21 to 28 (VPVELKAR). A disulfide bond links Cys31 and Cys46. 6 PbH1 repeats span residues 158–187 (SDNLNITDVTIDNSAGTAEGHNTDAFDVGS), 188–209 (STYINIDGATVYNQDDCLAINS), 210–230 (GSHITFTNGYCDGGHGLSIGS), 239–260 (VEDVTISNSKVVNSQNGVRIKT), 268–290 (VSNVKFEDITLSGITKYGLIVEQ), and 302–347 (TNGI…SITG). Asn162 carries an N-linked (GlcNAc...) asparagine glycan. The active-site Proton donor is Asp202. A disulfide bond links Cys204 and Cys220. The active site involves His224. Cystine bridges form between Cys330–Cys335 and Cys354–Cys363. N-linked (GlcNAc...) asparagine glycosylation occurs at Asn356.

This sequence belongs to the glycosyl hydrolase 28 family.

It is found in the secreted. The catalysed reaction is (1,4-alpha-D-galacturonosyl)n+m + H2O = (1,4-alpha-D-galacturonosyl)n + (1,4-alpha-D-galacturonosyl)m.. Its function is as follows. Involved in maceration and soft-rotting of plant tissue. Hydrolyzes the 1,4-alpha glycosidic bonds of de-esterified pectate in the smooth region of the plant cell wall. This Aspergillus oryzae (strain ATCC 42149 / RIB 40) (Yellow koji mold) protein is Endopolygalacturonase B (pgaB).